Reading from the N-terminus, the 283-residue chain is Coiled-coil domain-containing protein 42 homolog (283 aa).

Coiled-coil stretches lie at residues 31-139 (ATQL…LQRY) and 174-204 (QDLR…HRVS).

Belongs to the CFAP73 family.

The chain is Coiled-coil domain-containing protein 42 homolog from Monosiga brevicollis (Choanoflagellate).